The primary structure comprises 298 residues: Proton-activated chloride channel (298 aa).

The Cytoplasmic segment spans residues 1–12 (MPIGFNKACLKN). The helical transmembrane segment at 13–33 (VFTVILVLIYLALTAVAVFLA) threads the bilayer. The Extracellular segment spans residues 34 to 245 (YQTISDFMDK…RDPFIQQVKD (212 aa)). The helical transmembrane segment at 246–266 (IVTANPWNTIAILCGVFMALF) threads the bilayer. Residues 267 to 298 (KAADFAKLSIKWMIRIRKRHIRAKMREMNQIS) lie on the Cytoplasmic side of the membrane.

This sequence belongs to the proton-activated chloride channel family.

It is found in the cell membrane. The enzyme catalyses chloride(in) = chloride(out). Its function is as follows. Chloride channel gated by pH that facilitates the entry of chloride ions into cells upon exposure to extracellular acidic pH. Displays channel activity with distinct kinetic properties compared to the human ortholog channel. The polypeptide is Proton-activated chloride channel (Danio rerio (Zebrafish)).